A 269-amino-acid polypeptide reads, in one-letter code: Probable membrane transporter protein YfcA (269 aa).

Topologically, residues Met-1–Leu-7 are periplasmic. Residues Phe-8–Ile-28 form a helical membrane-spanning segment. At Asp-29–Ser-30 the chain is on the cytoplasmic side. Residues Ile-31–Ala-51 form a helical membrane-spanning segment. Topologically, residues Asn-52 to Lys-84 are periplasmic. A helical transmembrane segment spans residues Leu-85–Gln-105. At Ala-106–Gln-111 the chain is on the cytoplasmic side. Residues Ile-112–Glu-132 traverse the membrane as a helical segment. The Periplasmic portion of the chain corresponds to Glu-133–Asp-156. Residues Gly-157–Phe-177 traverse the membrane as a helical segment. Over Asn-178 to Gly-197 the chain is Cytoplasmic. The helical transmembrane segment at Leu-198–Gly-218 threads the bilayer. Over Gln-219–Asn-269 the chain is Periplasmic.

It belongs to the 4-toluene sulfonate uptake permease (TSUP) (TC 2.A.102) family.

It is found in the cell inner membrane. This Escherichia coli O157:H7 protein is Probable membrane transporter protein YfcA (yfcA).